Here is a 105-residue protein sequence, read N- to C-terminus: Thioredoxin (105 aa).

A Thioredoxin domain is found at 2 to 105 (VKSVGNLADF…KLEETIKSLV (104 aa)). Active-site nucleophile residues include Cys32 and Cys35. Cys32 and Cys35 form a disulfide bridge. 2 positions are modified to S-nitrosocysteine: Cys69 and Cys73.

The protein belongs to the thioredoxin family. In terms of processing, may be nitrosylated on several cysteine residues, depending on the oxidation state. Nitrosylated Cys-73 may serve as donor for nitrosylation of target proteins.

The protein resides in the nucleus. The protein localises to the cytoplasm. It is found in the secreted. Functionally, participates in various redox reactions through the reversible oxidation of its active center dithiol to a disulfide and catalyzes dithiol-disulfide exchange reactions. Plays a role in the reversible S-nitrosylation of cysteine residues in target proteins, and thereby contributes to the response to intracellular nitric oxide. Nitrosylates the active site Cys of CASP3 in response to nitric oxide (NO), and thereby inhibits caspase-3 activity. Induces the FOS/JUN AP-1 DNA binding activity in ionizing radiation (IR) cells through its oxidation/reduction status and stimulates AP-1 transcriptional activity. The polypeptide is Thioredoxin (TXN) (Gallus gallus (Chicken)).